A 231-amino-acid polypeptide reads, in one-letter code: uncharacterized protein (231 aa).

5 helical membrane-spanning segments follow: residues 36–56 (SLLA…SFFI), 58–78 (SQVT…ALQW), 83–103 (APLN…TLTP), 143–163 (FTVM…ASLL), and 170–190 (SIVN…YILY).

Belongs to the BI1 family.

It localises to the cell membrane. This is an uncharacterized protein from Campylobacter jejuni subsp. jejuni serotype O:2 (strain ATCC 700819 / NCTC 11168).